Here is a 313-residue protein sequence, read N- to C-terminus: MDTSTNLDIGAQLIVEECPSTYSLTGMPDIKIEHPLDPNSEEGSAQGVAMGMKFILPNRFDMNVCSRFVKSLNEEDSKNIQDQVNSDLEVASVLFKAECNIHTSPSPGIQVRHVYTPSTTKHFSPIKQSTTLTNKHRGNEVSTTPLLANSLSVHQLAAQGEMLYLATRIEQENVINHTDEEGFTPLMWAAAHGQIAVVEFLLQNGADPQLLGKGRESALSLACSKGYTDIVKMLLDCGVDVNEYDWNGGTPLLYAVHGNHVKCVKMLLESGADPTIETDSGYNSMDLAVALGYRSVQQVIESHLLKLLQNIKE.

ANK repeat units follow at residues A148–E180, E181–K213, G214–W246, N247–D279, and S280–E313.

Interacts (via ANK repeats) with CCDC8 (via PxLPxI/L motif); mediates the interaction with the 3M complex which is composed of CCDC8, CUL7 and OBSL1. Interacts (via ANK repeats) with HDAC4 (via PxLPxI/L motif). Interacts (via ANK repeats) with HDAC5 (via PxLPxI/L motif). Interacts (via ANK repeats) with LRP2/megalin (via PxLPxI/L motif). Interacts (via ANK repeats) with RFX7 (via PxLPxI/L motif). Interacts with AHRR. Interacts with NEK6.

It localises to the cytoplasm. The protein resides in the cytoskeleton. It is found in the membrane. In terms of biological role, may regulate the interaction between the 3M complex and the histone deacetylases HDAC4 and HDAC5. May also regulate LRP2/megalin. The protein is Ankyrin repeat family A protein 2 (ANKRA2) of Homo sapiens (Human).